Here is a 420-residue protein sequence, read N- to C-terminus: Tryptophan synthase beta chain (420 aa).

N6-(pyridoxal phosphate)lysine is present on lysine 112.

This sequence belongs to the TrpB family. In terms of assembly, tetramer of two alpha and two beta chains. It depends on pyridoxal 5'-phosphate as a cofactor.

It carries out the reaction (1S,2R)-1-C-(indol-3-yl)glycerol 3-phosphate + L-serine = D-glyceraldehyde 3-phosphate + L-tryptophan + H2O. It participates in amino-acid biosynthesis; L-tryptophan biosynthesis; L-tryptophan from chorismate: step 5/5. Functionally, the beta subunit is responsible for the synthesis of L-tryptophan from indole and L-serine. In Thermosipho africanus (strain TCF52B), this protein is Tryptophan synthase beta chain.